We begin with the raw amino-acid sequence, 611 residues long: Dihydroxy-acid dehydratase (611 aa).

Asp-81 lines the Mg(2+) pocket. Cys-122 contributes to the [2Fe-2S] cluster binding site. Mg(2+) is bound by residues Asp-123 and Lys-124. At Lys-124 the chain carries N6-carboxylysine. Cys-195 serves as a coordination point for [2Fe-2S] cluster. A Mg(2+)-binding site is contributed by Glu-491. The active-site Proton acceptor is Ser-517.

It belongs to the IlvD/Edd family. In terms of assembly, homodimer. It depends on [2Fe-2S] cluster as a cofactor. Mg(2+) serves as cofactor.

It carries out the reaction (2R)-2,3-dihydroxy-3-methylbutanoate = 3-methyl-2-oxobutanoate + H2O. The enzyme catalyses (2R,3R)-2,3-dihydroxy-3-methylpentanoate = (S)-3-methyl-2-oxopentanoate + H2O. Its pathway is amino-acid biosynthesis; L-isoleucine biosynthesis; L-isoleucine from 2-oxobutanoate: step 3/4. It participates in amino-acid biosynthesis; L-valine biosynthesis; L-valine from pyruvate: step 3/4. Its function is as follows. Functions in the biosynthesis of branched-chain amino acids. Catalyzes the dehydration of (2R,3R)-2,3-dihydroxy-3-methylpentanoate (2,3-dihydroxy-3-methylvalerate) into 2-oxo-3-methylpentanoate (2-oxo-3-methylvalerate) and of (2R)-2,3-dihydroxy-3-methylbutanoate (2,3-dihydroxyisovalerate) into 2-oxo-3-methylbutanoate (2-oxoisovalerate), the penultimate precursor to L-isoleucine and L-valine, respectively. The sequence is that of Dihydroxy-acid dehydratase from Histophilus somni (strain 2336) (Haemophilus somnus).